Consider the following 439-residue polypeptide: Kinesin-like protein KIN-13 (439 aa).

1 to 5 (GSGKS) lines the ATP pocket. One can recognise a Kinesin motor domain in the interval 1 to 240 (GSGKSFTMMH…LRYADRVKEL (240 aa)).

Belongs to the TRAFAC class myosin-kinesin ATPase superfamily. Kinesin family. KIN-13 subfamily. In terms of assembly, interacts with PLK. In terms of processing, phosphorylated by PLK.

The protein localises to the cytoplasm. Its subcellular location is the cytoskeleton. It is found in the cell projection. It localises to the cilium. The protein resides in the flagellum. The protein localises to the flagellum basal body. Its subcellular location is the flagellum axoneme. It is found in the spindle. It localises to the chromosome. The protein resides in the centromere. The protein localises to the kinetochore. Involved in cell cycle. Involved in formation of flagella, regulation of flagellar length, and formation of median bodies during interphase. Regulates flagellar length in all eight distal flagellar tips by promoting disassembly of the microtubules. Disassembles microtubules at the distal flagellar tips in a length-dependent manner in order to maintain different equilibrium lengths of the four flagellar pairs. Regulates interphase and mitotic microtubule dynamics. Regulates microtubule disassembly dynamics of the dual mitotic spindles and the median body. The protein is Kinesin-like protein KIN-13 of Giardia intestinalis (Giardia lamblia).